A 306-amino-acid chain; its full sequence is Ornithine carbamoyltransferase (306 aa).

Carbamoyl phosphate is bound by residues 54 to 57, Gln-81, Arg-105, and 132 to 135; these read STRT and HPLQ. L-ornithine-binding positions include Asn-162, Asp-226, and 230-231; that span reads SM. Carbamoyl phosphate contacts are provided by residues 266–267 and Arg-294; that span reads CL.

It belongs to the aspartate/ornithine carbamoyltransferase superfamily. OTCase family.

It localises to the cytoplasm. The enzyme catalyses carbamoyl phosphate + L-ornithine = L-citrulline + phosphate + H(+). The protein operates within amino-acid biosynthesis; L-arginine biosynthesis; L-arginine from L-ornithine and carbamoyl phosphate: step 1/3. In terms of biological role, reversibly catalyzes the transfer of the carbamoyl group from carbamoyl phosphate (CP) to the N(epsilon) atom of ornithine (ORN) to produce L-citrulline. In Sulfolobus acidocaldarius (strain ATCC 33909 / DSM 639 / JCM 8929 / NBRC 15157 / NCIMB 11770), this protein is Ornithine carbamoyltransferase.